Reading from the N-terminus, the 520-residue chain is Putative hydrolase Mb2247c (520 aa).

The signal sequence occupies residues 1 to 34 (MAAMWRRRPLSSALLSFGLLLGGLPLAAPPLAGA). The chain crosses the membrane as a helical span at residues 104 to 124 (FGALLVNPGGPGASAVDMVAA). Residues 105–403 (GALLVNPGGP…APTPADPAAW (299 aa)) enclose the AB hydrolase-1 domain. Residue Ser-232 is the Nucleophile of the active site. Asp-461 is an active-site residue. The active-site Proton donor is His-488.

Belongs to the peptidase S33 family.

It is found in the cell membrane. In Mycobacterium bovis (strain ATCC BAA-935 / AF2122/97), this protein is Putative hydrolase Mb2247c.